The sequence spans 316 residues: MSSLGGGSQDAGGSSSSSNTSSSSGSGQKAGGTDKSATVAATAPASVADDAPPPERRNKSGIISEPLNKSLRRSRPLSHYSSFGSSGGAGSMMGGESADKAAAAAASLLANGHDLAAAMAVDKSNPTSKHKSGAVASLLSKAERATELAAEGQLTLQQFAQSTEMLKRVVQEHLPLMSEAGAGLPDMEAVAGAEALNGQSDFPYLGAFPINPGLFIMTPAGVFLAESALHMAGLAEYPMQGELASAISSGKKKRKRCGMCAPCRRRINCEQCSSCRNRKTGHQICKFRKCEELKKKPSAALEKVMLPSGAAFRWFQ.

Positions 1–10 (MSSLGGGSQD) are enriched in gly residues. Residues 1–95 (MSSLGGGSQD…SGGAGSMMGG (95 aa)) form a disordered region. Low complexity-rich tracts occupy residues 11-27 (AGGS…SGSG) and 36-50 (SATV…VADD). A CXXC-type zinc finger spans residues 250 to 291 (GKKKRKRCGMCAPCRRRINCEQCSSCRNRKTGHQICKFRKCE). A Nuclear localization signal motif is present at residues 251 to 256 (KKKRKR). Positions 257, 260, 263, 269, 272, 275, 285, and 290 each coordinate Zn(2+).

Interacts with DVL1. Interacts with RBPJ. Expressed in neural stem cells (at protein level). Expressed in the dorsal telencephalon.

The protein resides in the nucleus. The protein localises to the cytoplasm. May indirectly participate in activation of the NF-kappa-B and MAPK pathways. Required for DNA damage-induced ATM phosphorylation, p53 activation and cell cycle arrest. Involved in myelopoiesis. Acts as a mediator of BMP4-mediated modulation of canonical Wnt signaling activity in neural stem cells. Binds to the oxygen responsive element of COX4I2 and represses its transcription under hypoxia conditions (4% oxygen), as well as normoxia conditions (20% oxygen). May repress COX4I2 transactivation induced by CHCHD2 and RBPJ. Binds preferentially to DNA containing cytidine-phosphate-guanosine (CpG) dinucleotides over CpH (H=A, T, and C), hemimethylated-CpG and hemimethylated-hydroxymethyl-CpG. The polypeptide is CXXC-type zinc finger protein 5 (Cxxc5) (Rattus norvegicus (Rat)).